The sequence spans 286 residues: 2,3,4,5-tetrahydropyridine-2,6-dicarboxylate N-succinyltransferase (286 aa).

It belongs to the transferase hexapeptide repeat family.

The protein localises to the cytoplasm. The catalysed reaction is (S)-2,3,4,5-tetrahydrodipicolinate + succinyl-CoA + H2O = (S)-2-succinylamino-6-oxoheptanedioate + CoA. Its pathway is amino-acid biosynthesis; L-lysine biosynthesis via DAP pathway; LL-2,6-diaminopimelate from (S)-tetrahydrodipicolinate (succinylase route): step 1/3. This is 2,3,4,5-tetrahydropyridine-2,6-dicarboxylate N-succinyltransferase from Rhizobium leguminosarum bv. trifolii (strain WSM2304).